The sequence spans 525 residues: MRIFRFVKIVFTVIRFGLDEVMLSRIENPRVKLLLRITTIGRRFADPPAVRLRRALESLGPIFVKFGQVLSTRRDLLPVDFANELAKLQDQVPPFDSAVAIAIVEKSLGARIDVLFDEFERVPVASASIAQVHFAKLKQGEHKGKAVAVKVLRPNMLPVIDSDLALMRDIATWAERLWADGRRLKPREVVAEFDKYLHDELDLMREAANGSQLRRNFAGLDLLLVPEMFWDYSTPAVLVMERMTGVPISQVDTLRAAGVDIPKLAREGVEIFFTQVFRDGFFHADMHPGNIQVSLDPKHFGRYIALDFGIVGALSDFDKNYLAQNFLAFFKRDYHRVATLHLESGWVPPDTRVEELESAIRAVCEPYFDRALKDISLGQVLMRLFSTSRRFNVEIQPQLVLLQKTMLNVEGLGRSLDPELDLWKTAKPYLERWMTEQIGLRGWYERFKVEAPQWSKTLPQLPRLVHQALISHHEAPRAISDDLIRQILVEQRRTNRLLQALLVFGLAVGAGAVIARVLIVLAYGG.

One can recognise a Protein kinase domain in the interval 118-500 (EFERVPVASA…QRRTNRLLQA (383 aa)). ATP-binding positions include 124–132 (VASASIAQV) and Lys-150. Asp-285 acts as the Proton acceptor in catalysis. The chain crosses the membrane as a helical span at residues 501-521 (LLVFGLAVGAGAVIARVLIVL).

It belongs to the ABC1 family. UbiB subfamily.

The protein localises to the cell inner membrane. The protein operates within cofactor biosynthesis; ubiquinone biosynthesis [regulation]. Functionally, is probably a protein kinase regulator of UbiI activity which is involved in aerobic coenzyme Q (ubiquinone) biosynthesis. This chain is Probable protein kinase UbiB, found in Burkholderia mallei (strain SAVP1).